The primary structure comprises 355 residues: 6-aminohexanoate-oligomer endohydrolase (355 aa).

The active-site Nucleophile is the Thr-267.

The protein belongs to the peptidase S58 family. As to quaternary structure, heterotetramer composed of 4 alpha/beta heterodimers. Post-translationally, expressed as an inactive precursor that is cleaved autocatalytically at Asn266/Thr267 to generate an active enzyme composed of an alpha subunit and a beta subunit.

The enzyme catalyses [N-(6-aminohexanoyl)]n + H2O = [N-(6-aminohexanoyl)]n-x + [N-(6-aminohexanoyl)]x.. It functions in the pathway xenobiotic degradation; nylon-6 oligomer degradation. Its function is as follows. Involved in the degradation of nylon-6 oligomers. Degrades cyclic and linear oligomers of 6-aminohexanoate (Ahx) with a degree of polymerization greater than three by an endo-type mode. Cannot use Ahx cyclic dimer or the Ahx linear dimer. In Agromyces sp. (strain KY5R), this protein is 6-aminohexanoate-oligomer endohydrolase.